Here is a 206-residue protein sequence, read N- to C-terminus: D-ribitol-5-phosphate phosphatase (206 aa).

The Nucleophile role is filled by D8. D8 and D172 together coordinate Mg(2+).

It belongs to the HAD-like hydrolase superfamily. Mg(2+) is required as a cofactor.

It catalyses the reaction D-ribitol 1-phosphate + H2O = ribitol + phosphate. It carries out the reaction D-ribitol 5-phosphate + H2O = ribitol + phosphate. The enzyme catalyses 5-amino-6-(5-phospho-D-ribitylamino)uracil + H2O = 5-amino-6-(D-ribitylamino)uracil + phosphate. Its pathway is cofactor biosynthesis; riboflavin biosynthesis; 5-amino-6-(D-ribitylamino)uracil from GTP: step 4/4. Functionally, catalyzes the dephosphorylation of D-ribitol-5-phosphate and D-ribitol-1-phosphate. Is also able to dephosphorylate 5-amino-6-(5-phospho-D-ribitylamino)uracil, and thus could be involved in the riboflavin biosynthesis pathway. This is D-ribitol-5-phosphate phosphatase from Bacteroides thetaiotaomicron (strain ATCC 29148 / DSM 2079 / JCM 5827 / CCUG 10774 / NCTC 10582 / VPI-5482 / E50).